The sequence spans 557 residues: Isocitrate lyase (557 aa).

Thr-53 is subject to Phosphothreonine. Substrate is bound at residue 106-108; the sequence is SGW. Residue Asp-179 coordinates Mg(2+). The active-site Proton acceptor is Cys-217. Residues 218-219, Arg-254, 437-441, and Thr-471 contribute to the substrate site; these read GH and NLSPS.

Belongs to the isocitrate lyase/PEP mutase superfamily. Isocitrate lyase family. Homotetramer. It depends on Mg(2+) as a cofactor. Phosphorylated in response to elevated glucose levels, leading first to reversible inactivation of the enzyme (short-term inactivation), and at a later stage to proteolytic degradation of the protein (long-term inactivation).

It localises to the cytoplasm. Its subcellular location is the secreted. It is found in the extracellular space. The protein localises to the extracellular matrix. The protein resides in the vacuole. The enzyme catalyses D-threo-isocitrate = glyoxylate + succinate. It catalyses the reaction (2S,3R)-3-hydroxybutane-1,2,3-tricarboxylate = pyruvate + succinate. It participates in carbohydrate metabolism; glyoxylate cycle; (S)-malate from isocitrate: step 1/2. Its activity is regulated as follows. Phosphorylated and inactivated after addition of glucose to the cell culture (repressing conditions). In terms of biological role, catalyzes the formation of succinate and glyoxylate from isocitrate, a key step of the glyoxylate cycle, which operates as an anaplerotic route for replenishing the tricarboxylic acid cycle. Required for growth on ethanol or acetate, but dispensable when fermentable carbon sources are available. Also acts on 2-methylisocitrate. The chain is Isocitrate lyase from Saccharomyces cerevisiae (strain ATCC 204508 / S288c) (Baker's yeast).